A 661-amino-acid polypeptide reads, in one-letter code: UvrABC system protein B (661 aa).

Positions 25–414 (AGLNSKKRSQ…DTVVELIIRP (390 aa)) constitute a Helicase ATP-binding domain. ATP is bound at residue 38–45 (GITGSGKT). Positions 91–114 (YYDYYQPEAYIARTDTFIEKDSSI) match the Beta-hairpin motif. The Helicase C-terminal domain maps to 430–592 (QVEDLIGEIQ…IIPKTINRAI (163 aa)). The region spanning 621–656 (KAHIEKLKKDMLKAASNLEFEQAAKLRDQLKTLEEA) is the UVR domain.

It belongs to the UvrB family. In terms of assembly, forms a heterotetramer with UvrA during the search for lesions. Interacts with UvrC in an incision complex.

It is found in the cytoplasm. Functionally, the UvrABC repair system catalyzes the recognition and processing of DNA lesions. A damage recognition complex composed of 2 UvrA and 2 UvrB subunits scans DNA for abnormalities. Upon binding of the UvrA(2)B(2) complex to a putative damaged site, the DNA wraps around one UvrB monomer. DNA wrap is dependent on ATP binding by UvrB and probably causes local melting of the DNA helix, facilitating insertion of UvrB beta-hairpin between the DNA strands. Then UvrB probes one DNA strand for the presence of a lesion. If a lesion is found the UvrA subunits dissociate and the UvrB-DNA preincision complex is formed. This complex is subsequently bound by UvrC and the second UvrB is released. If no lesion is found, the DNA wraps around the other UvrB subunit that will check the other stand for damage. The polypeptide is UvrABC system protein B (Rickettsia felis (strain ATCC VR-1525 / URRWXCal2) (Rickettsia azadi)).